The chain runs to 444 residues: MTKIKYGVVSLGCDKNRIDSEVMINEIKKEGIITNDPKEADVIIVNTCGFIEDSKKESIDTILEMSNYKNNNCKVLVVTGCLSQRYGEELQELLPEVDVMLGVNDYDKLSDAIKKSIEKGEKSLYCNYSNTVINEGGRVLTTQKHYAYLRIAEGCDNFCTYCAIPKIRGKYRSRKIEDIIEEAKFLSQNGVKEIIIVAQDTTRYGLDIYGEKTLPSLLKQLEEVDGIEWIRLLYCYPEDITEELIEEFARNKKLCKYVDVPIQHISDSVLKRMGRKGNKQLVTKVLRDIKKRVPEMSIRTSLIVGFPGEMEEDFKELKDFVEEFKFQNLGVFKYSQEEGTPAATMEDQVLEEIKETRREELMKMQRDIVKSINADKVNKVYKVVVDNFNGEHYIGRNYEMLPEIDGAIYFKCDKILNIGEMVCIKILETLEYDLIGVVCDESCK.

One can recognise an MTTase N-terminal domain in the interval 4 to 118 (IKYGVVSLGC…LSDAIKKSIE (115 aa)). 6 residues coordinate [4Fe-4S] cluster: Cys13, Cys48, Cys81, Cys155, Cys159, and Cys162. One can recognise a Radical SAM core domain in the interval 141–373 (TTQKHYAYLR…MQRDIVKSIN (233 aa)). The TRAM domain maps to 374–440 (ADKVNKVYKV…EYDLIGVVCD (67 aa)).

The protein belongs to the methylthiotransferase family. RimO subfamily. [4Fe-4S] cluster is required as a cofactor.

The protein localises to the cytoplasm. The catalysed reaction is L-aspartate(89)-[ribosomal protein uS12]-hydrogen + (sulfur carrier)-SH + AH2 + 2 S-adenosyl-L-methionine = 3-methylsulfanyl-L-aspartate(89)-[ribosomal protein uS12]-hydrogen + (sulfur carrier)-H + 5'-deoxyadenosine + L-methionine + A + S-adenosyl-L-homocysteine + 2 H(+). Catalyzes the methylthiolation of an aspartic acid residue of ribosomal protein uS12. This Clostridium tetani (strain Massachusetts / E88) protein is Ribosomal protein uS12 methylthiotransferase RimO.